Here is an 87-residue protein sequence, read N- to C-terminus: MSDAAVPPKKASPKKASPKKAAPKKAVAKKTPAKKTAKKPAVKKPAAKKRAAPKKKPAAAKKAVTKSAKKHAAKKAPKKAVKKAPKK.

A disordered region spans residues 1–87; it reads MSDAAVPPKK…KKAVKKAPKK (87 aa). Positions 11 to 87 are enriched in basic residues; sequence ASPKKASPKK…KKAVKKAPKK (77 aa).

It localises to the nucleus. Its subcellular location is the chromosome. The protein is Histone H1.C6/H1.C9 of Trypanosoma cruzi.